Here is a 714-residue protein sequence, read N- to C-terminus: Fatty acid oxidation complex subunit alpha (714 aa).

Positions 1–190 (MEMASAFTLN…KLGLVDDVVP (190 aa)) are enoyl-CoA hydratase. The interval 306-714 (APLNSVGILG…FWKTTATDLQ (409 aa)) is 3-hydroxyacyl-CoA dehydrogenase.

In the N-terminal section; belongs to the enoyl-CoA hydratase/isomerase family. This sequence in the central section; belongs to the 3-hydroxyacyl-CoA dehydrogenase family. In terms of assembly, heterotetramer of two alpha chains (FadJ) and two beta chains (FadI).

The protein resides in the cytoplasm. It carries out the reaction a (3S)-3-hydroxyacyl-CoA = a (2E)-enoyl-CoA + H2O. The catalysed reaction is a 4-saturated-(3S)-3-hydroxyacyl-CoA = a (3E)-enoyl-CoA + H2O. The enzyme catalyses a (3S)-3-hydroxyacyl-CoA + NAD(+) = a 3-oxoacyl-CoA + NADH + H(+). It catalyses the reaction (3S)-3-hydroxybutanoyl-CoA = (3R)-3-hydroxybutanoyl-CoA. Its pathway is lipid metabolism; fatty acid beta-oxidation. Its function is as follows. Catalyzes the formation of a hydroxyacyl-CoA by addition of water on enoyl-CoA. Also exhibits 3-hydroxyacyl-CoA epimerase and 3-hydroxyacyl-CoA dehydrogenase activities. The polypeptide is Fatty acid oxidation complex subunit alpha (Escherichia coli (strain ATCC 8739 / DSM 1576 / NBRC 3972 / NCIMB 8545 / WDCM 00012 / Crooks)).